We begin with the raw amino-acid sequence, 88 residues long: Protein K3 (88 aa).

The S1 motif domain maps to 8–82; that stretch reads LPNAGDVIKG…TKGYIDVNYK (75 aa). 2 binding to host EIF2AK2/PKR regions span residues 43-53 and 74-79; these read SVKMHMDRYVE and KGYIDV.

Belongs to the poxviridae K3 protein family. Interacts with host EIF2AK2/PKR kinase.

Its function is as follows. Viral mimic of EIF2S1/eIF-2alpha that acts as a pseudosubstrate for EIF2AK2/PKR kinase. Inhibits therefore EIF2S1/eIF-2alpha phosphorylation by host EIF2AK2/PKR kinase and prevents protein synthesis shutoff. Determinant of host species specificity. In Vaccinia virus (strain Western Reserve) (VACV), this protein is Protein K3.